We begin with the raw amino-acid sequence, 291 residues long: F-box/kelch-repeat protein At5g38670 (291 aa).

Residues 5–51 (TNPNPSLPDDLILSCVARVSRLYYPALSLVSKSFRSLIASPELYKTR) form the F-box domain. 4 Kelch repeats span residues 46–91 (ELYK…VLDE), 92–140 (KIYV…RFDG), 142–187 (LHLV…WYTI), and 189–232 (KGDI…YGGK).

The protein is F-box/kelch-repeat protein At5g38670 of Arabidopsis thaliana (Mouse-ear cress).